The chain runs to 471 residues: 3-isopropylmalate dehydratase large subunit (471 aa).

3 residues coordinate [4Fe-4S] cluster: cysteine 347, cysteine 409, and cysteine 412.

The protein belongs to the aconitase/IPM isomerase family. LeuC type 1 subfamily. As to quaternary structure, heterodimer of LeuC and LeuD. [4Fe-4S] cluster serves as cofactor.

It catalyses the reaction (2R,3S)-3-isopropylmalate = (2S)-2-isopropylmalate. It functions in the pathway amino-acid biosynthesis; L-leucine biosynthesis; L-leucine from 3-methyl-2-oxobutanoate: step 2/4. Catalyzes the isomerization between 2-isopropylmalate and 3-isopropylmalate, via the formation of 2-isopropylmaleate. This Buchnera aphidicola subsp. Rhopalosiphum padi protein is 3-isopropylmalate dehydratase large subunit.